The chain runs to 224 residues: Protein LURP-one-related 1 (224 aa).

The segment at 1 to 23 (MQQPYEYRYPQGTGPSAPPPPPK) is disordered.

Belongs to the LOR family.

Functionally, might be related to the phospholipid scramblase and tubby-like superfamily of membrane tethered transcription factors. This is Protein LURP-one-related 1 from Arabidopsis thaliana (Mouse-ear cress).